Consider the following 860-residue polypeptide: Alanine--tRNA ligase (860 aa).

Positions 563, 567, 665, and 669 each coordinate Zn(2+). The tract at residues 824–843 (VGGKGGGRPDMAQAGGTDSS) is disordered.

Belongs to the class-II aminoacyl-tRNA synthetase family. Zn(2+) serves as cofactor.

Its subcellular location is the cytoplasm. The catalysed reaction is tRNA(Ala) + L-alanine + ATP = L-alanyl-tRNA(Ala) + AMP + diphosphate. Functionally, catalyzes the attachment of alanine to tRNA(Ala) in a two-step reaction: alanine is first activated by ATP to form Ala-AMP and then transferred to the acceptor end of tRNA(Ala). Also edits incorrectly charged Ser-tRNA(Ala) and Gly-tRNA(Ala) via its editing domain. This chain is Alanine--tRNA ligase, found in Vibrio vulnificus (strain YJ016).